We begin with the raw amino-acid sequence, 121 residues long: ATP synthase epsilon chain (121 aa).

Belongs to the ATPase epsilon chain family. F-type ATPases have 2 components, CF(1) - the catalytic core - and CF(0) - the membrane proton channel. CF(1) has five subunits: alpha(3), beta(3), gamma(1), delta(1), epsilon(1). CF(0) has three main subunits: a, b and c.

It localises to the cell membrane. Functionally, produces ATP from ADP in the presence of a proton gradient across the membrane. The polypeptide is ATP synthase epsilon chain (Mycobacterium leprae (strain Br4923)).